A 161-amino-acid chain; its full sequence is uncharacterized protein (161 aa).

Residues 1 to 10 (MSKQQEQDTP) show a composition bias toward polar residues. 3 disordered regions span residues 1-20 (MSKQ…QRLQ), 55-84 (KKTR…MSDE), and 118-161 (LLQQ…ANNS). Residues 82–107 (SDEEYARQLQEEMDRLDASIQMDKEA) are a coiled coil. A compositionally biased stretch (low complexity) spans 144 to 161 (QQSSNTTTSSSCQSANNS).

This is an uncharacterized protein from Caenorhabditis elegans.